Reading from the N-terminus, the 682-residue chain is Solute carrier organic anion transporter family member 2B1 (682 aa).

A disordered region spans residues 1–30; the sequence is MPDRSTKATMGAEDIHERKVSMEPRDSHQD. Residues 1-41 lie on the Cytoplasmic side of the membrane; it reads MPDRSTKATMGAEDIHERKVSMEPRDSHQDAQPRGMFQNIK. The segment covering 13–30 has biased composition (basic and acidic residues); sequence EDIHERKVSMEPRDSHQD. The residue at position 21 (Ser-21) is a Phosphoserine. The helical transmembrane segment at 42–61 threads the bilayer; the sequence is FFVLCHSILQLAQLMISGYL. Residues 62–80 are Extracellular-facing; that stretch reads KSSISTVEKRFGLSSQTSG. A helical transmembrane segment spans residues 81–101; it reads LLAAFNEVGNISLILFVSYFG. Residues 102-107 are Cytoplasmic-facing; the sequence is SRVHRP. A helical transmembrane segment spans residues 108–132; sequence RMIGCGAILVAVAGLLMALPHFISE. The Extracellular portion of the chain corresponds to 133-176; sequence PYRYDHSSPDRSQDFEASLCLPTTMAPASALSNDSCSSRTETKH. Residue Asn-165 is glycosylated (N-linked (GlcNAc...) asparagine). The chain crosses the membrane as a helical span at residues 177–206; the sequence is LTMVGIMFTAQTLLGIGGVPIQPFGISYID. At 207–225 the chain is on the cytoplasmic side; that stretch reads DFAHHSNSPLYLGILFAIT. Residues 226 to 246 form a helical membrane-spanning segment; it reads MMGPGLAYGLGSLMLRLYVDI. At 247–264 the chain is on the extracellular side; it reads DRMPEGGINLTTKDPRWV. A glycan (N-linked (GlcNAc...) asparagine) is linked at Asn-255. A helical transmembrane segment spans residues 265-289; that stretch reads GAWWLGFLISAGLVVLAASPYFFFP. Residues 290–354 lie on the Cytoplasmic side of the membrane; that stretch reads REMPKEKYEL…IKVFPRVLLR (65 aa). Residues Ser-311 and Ser-314 each carry the phosphoserine modification. A helical membrane pass occupies residues 355–376; the sequence is TLRHPIFLLVVLSQVCTSSMVA. The Extracellular segment spans residues 377 to 396; the sequence is GTATFLPKFLERQFSITASF. The helical transmembrane segment at 397 to 420 threads the bilayer; sequence ANLLLGCLTIPLAIVGIVVGGVLV. Residues 421 to 424 lie on the Cytoplasmic side of the membrane; that stretch reads KRLH. Residues 425–448 traverse the membrane as a helical segment; that stretch reads LSPMQCSALCLLGSLLCLLLSLPL. At 449–552 the chain is on the extracellular side; the sequence is FFIGCSTHHI…SACSRLVLPF (104 aa). The region spanning 471 to 531 is the Kazal-like domain; it reads PSLFPGCSEP…VFYTNCSCVA (61 aa). Cystine bridges form between Cys-477/Cys-508, Cys-483/Cys-504, and Cys-492/Cys-529. Residues Asn-526 and Asn-533 are each glycosylated (N-linked (GlcNAc...) asparagine). The helical transmembrane segment at 553–575 threads the bilayer; sequence ILLISLGAAVASITHTPSFMLIL. At 576–584 the chain is on the cytoplasmic side; the sequence is RGVKKEDKT. Residues 585-610 form a helical membrane-spanning segment; sequence LAVGMQFMLLRVLAWMPSPVIHGSAI. Residues 611 to 643 are Extracellular-facing; it reads DTTCVHWALTCGRRAVCRYYDHDLLRNRFIGLQ. Residues 644–661 traverse the membrane as a helical segment; it reads FFFKSGSLVCFALVLAIL. The Cytoplasmic segment spans residues 662 to 682; the sequence is RQQSREASTKATVKSSDLQEL.

Belongs to the organo anion transporter (TC 2.A.60) family. In terms of tissue distribution, expressed in liver, kidney, heart, lung and retina. Widely distributed in all brain regions.

The protein resides in the cell membrane. The protein localises to the basal cell membrane. It is found in the apical cell membrane. The enzyme catalyses coproporphyrin III(out) = coproporphyrin III(in). It catalyses the reaction substance P(out) = substance P(in). It carries out the reaction taurocholate(out) = taurocholate(in). The catalysed reaction is prostaglandin E1(out) = prostaglandin E1(in). The enzyme catalyses prostaglandin E2(out) = prostaglandin E2(in). It catalyses the reaction prostaglandin D2(out) = prostaglandin D2(in). It carries out the reaction leukotriene C4(out) = leukotriene C4(in). The catalysed reaction is L-thyroxine(out) = L-thyroxine(in). Functionally, mediates the Na(+)-independent transport of organic anions such as taurocholate, the prostaglandins D2 (PGD2), E1 (PGE1) and E2 (PGE2), leukotriene C4, thromboxane B2 and L-thyroxine. Also plays a role in the reuptake of neuropeptides such as substance P/TAC1 and vasoactive intestinal peptide/VIP released from retinal neurons. May act as a heme transporter that promotes cellular iron availability. Also transports heme by-product coproporphyrin III (CPIII), and may be involved in their hepatic disposition. May contribute to regulate the transport of organic compounds in testis across the blood-testis-barrier. Shows a pH-sensitive substrate specificity which may be ascribed to the protonation state of the binding site and leads to a stimulation of substrate transport in an acidic microenvironment. The exact transport mechanism has not been yet deciphered but most likely involves an anion exchange, coupling the cellular uptake of organic substrate with the efflux of an anionic compound. Hydrogencarbonate/HCO3(-) acts as a probable counteranion that exchanges for organic anions. Cytoplasmic glutamate may also act as counteranion in the placenta. In Rattus norvegicus (Rat), this protein is Solute carrier organic anion transporter family member 2B1.